The primary structure comprises 219 residues: 2-hydroxy-3-keto-5-methylthiopentenyl-1-phosphate phosphatase (219 aa).

This sequence belongs to the HAD-like hydrolase superfamily. MtnX family.

The catalysed reaction is 2-hydroxy-5-methylsulfanyl-3-oxopent-1-enyl phosphate + H2O = 1,2-dihydroxy-5-(methylsulfanyl)pent-1-en-3-one + phosphate. It participates in amino-acid biosynthesis; L-methionine biosynthesis via salvage pathway; L-methionine from S-methyl-5-thio-alpha-D-ribose 1-phosphate: step 4/6. Its function is as follows. Dephosphorylates 2-hydroxy-3-keto-5-methylthiopentenyl-1-phosphate (HK-MTPenyl-1-P) yielding 1,2-dihydroxy-3-keto-5-methylthiopentene (DHK-MTPene). The chain is 2-hydroxy-3-keto-5-methylthiopentenyl-1-phosphate phosphatase from Bacillus thuringiensis (strain Al Hakam).